The chain runs to 193 residues: Coiled-coil domain-containing protein 184 (193 aa).

Positions 39 to 68 (GMKELMEHLKAQLQALFEDVRAMRGALDEQ) form a coiled coil. The interval 101–176 (GLGVAGGKGS…LGENGPLVEP (76 aa)) is disordered. A compositionally biased stretch (acidic residues) spans 135 to 146 (PDEEDEEEEEEK).

In Rattus norvegicus (Rat), this protein is Coiled-coil domain-containing protein 184 (Ccdc184).